Reading from the N-terminus, the 233-residue chain is Putative quercetin 2,3-dioxygenase PM1685 (233 aa).

Residues His-59, His-61, His-103, and Glu-105 each coordinate a divalent metal cation.

Belongs to the pirin family. A divalent metal cation is required as a cofactor.

It carries out the reaction quercetin + O2 = 2-(3,4-dihydroxybenzoyloxy)-4,6-dihydroxybenzoate + CO. The protein operates within flavonoid metabolism; quercetin degradation. Functionally, putative quercetin 2,3-dioxygenase. This is Putative quercetin 2,3-dioxygenase PM1685 from Pasteurella multocida (strain Pm70).